The chain runs to 490 residues: Probable cytosol aminopeptidase (490 aa).

Lys-260 and Asp-265 together coordinate Mn(2+). Lys-272 is an active-site residue. The Mn(2+) site is built by Asp-284, Asp-343, and Glu-345. The active site involves Arg-347.

Belongs to the peptidase M17 family. Requires Mn(2+) as cofactor.

Its subcellular location is the cytoplasm. The enzyme catalyses Release of an N-terminal amino acid, Xaa-|-Yaa-, in which Xaa is preferably Leu, but may be other amino acids including Pro although not Arg or Lys, and Yaa may be Pro. Amino acid amides and methyl esters are also readily hydrolyzed, but rates on arylamides are exceedingly low.. It carries out the reaction Release of an N-terminal amino acid, preferentially leucine, but not glutamic or aspartic acids.. Presumably involved in the processing and regular turnover of intracellular proteins. Catalyzes the removal of unsubstituted N-terminal amino acids from various peptides. The chain is Probable cytosol aminopeptidase from Gloeothece citriformis (strain PCC 7424) (Cyanothece sp. (strain PCC 7424)).